The primary structure comprises 156 residues: Methylated-DNA--protein-cysteine methyltransferase (156 aa).

Cys-120 (nucleophile; methyl group acceptor) is an active-site residue.

The protein belongs to the MGMT family.

Its subcellular location is the cytoplasm. The catalysed reaction is a 6-O-methyl-2'-deoxyguanosine in DNA + L-cysteinyl-[protein] = S-methyl-L-cysteinyl-[protein] + a 2'-deoxyguanosine in DNA. It carries out the reaction a 4-O-methyl-thymidine in DNA + L-cysteinyl-[protein] = a thymidine in DNA + S-methyl-L-cysteinyl-[protein]. Its function is as follows. Involved in the cellular defense against the biological effects of O6-methylguanine (O6-MeG) and O4-methylthymine (O4-MeT) in DNA. Repairs the methylated nucleobase in DNA by stoichiometrically transferring the methyl group to a cysteine residue in the enzyme. This is a suicide reaction: the enzyme is irreversibly inactivated. The protein is Methylated-DNA--protein-cysteine methyltransferase of Metallosphaera sedula (strain ATCC 51363 / DSM 5348 / JCM 9185 / NBRC 15509 / TH2).